The following is a 367-amino-acid chain: MKVLVTGGGTGGHIYPALAVINELKERNQIVDILYVGTSKGMEQEIIPNRGIDFAAITVRGLQRKINLEQVYFLRDFLKGLYQSYRLIKNFTPDVVIGTGGYVCGPVLMAASLMKIPTVLHEQNVIPGITNKFLSRFADYTCVSFPESKNYMTKAKKIITTGNPRAQEITSRDFSSVNKHLNLRSDLKTLLIVSGSRGAQKINETMINIIPELISKFPIQIIYVTGNNYYESIRSQILEYVDNSYQDRLKLHAYLSDLPAAISCADLVISRAGATTLAELTAAETPSILIPSPNVTNDHQRVNAKILGERGAAKVLTEDSLNEQEVIKSISSIINDEEVLFDMQRATKEISYPTAATEICKILESLI.

UDP-N-acetyl-alpha-D-glucosamine contacts are provided by residues 10 to 12, N124, S196, and Q300; that span reads TGG.

This sequence belongs to the glycosyltransferase 28 family. MurG subfamily.

The protein resides in the cell membrane. The enzyme catalyses di-trans,octa-cis-undecaprenyl diphospho-N-acetyl-alpha-D-muramoyl-L-alanyl-D-glutamyl-meso-2,6-diaminopimeloyl-D-alanyl-D-alanine + UDP-N-acetyl-alpha-D-glucosamine = di-trans,octa-cis-undecaprenyl diphospho-[N-acetyl-alpha-D-glucosaminyl-(1-&gt;4)]-N-acetyl-alpha-D-muramoyl-L-alanyl-D-glutamyl-meso-2,6-diaminopimeloyl-D-alanyl-D-alanine + UDP + H(+). It functions in the pathway cell wall biogenesis; peptidoglycan biosynthesis. Cell wall formation. Catalyzes the transfer of a GlcNAc subunit on undecaprenyl-pyrophosphoryl-MurNAc-pentapeptide (lipid intermediate I) to form undecaprenyl-pyrophosphoryl-MurNAc-(pentapeptide)GlcNAc (lipid intermediate II). This Natranaerobius thermophilus (strain ATCC BAA-1301 / DSM 18059 / JW/NM-WN-LF) protein is UDP-N-acetylglucosamine--N-acetylmuramyl-(pentapeptide) pyrophosphoryl-undecaprenol N-acetylglucosamine transferase.